The sequence spans 242 residues: MSQITMRQMIEAGVHFGHQTRFWNPKMAQYIFGARNKIHIVNLEKTLPMFQDAQEAVRRLVANKGTVLFVGTKRQARDIIREEATRAGMPFVDYRWLGGMLTNYKTVKQSIKRLEEKTAALENAAESGFSKKEILEMQRDVEKLERSLGGIKNMKGLPDAIFVIDTGYQKGTLVETEKLGIPVIAVVDTNNSPDGVKYVIPGNDDSAKAIRLYCRGIADAVLEGKNQALQETVAAAQEAAAE.

It belongs to the universal ribosomal protein uS2 family.

In Neisseria meningitidis serogroup C (strain 053442), this protein is Small ribosomal subunit protein uS2.